Reading from the N-terminus, the 244-residue chain is DNA polymerase sliding clamp (244 aa).

Belongs to the PCNA family. As to quaternary structure, homotrimer. The subunits circularize to form a toroid; DNA passes through its center. Replication factor C (RFC) is required to load the toroid on the DNA.

Sliding clamp subunit that acts as a moving platform for DNA processing. Responsible for tethering the catalytic subunit of DNA polymerase to DNA during high-speed replication. In conjunction with replication factor C (RFC) stimulates DNA synthesis by PolB, relieving inhibition by replication protein A (RPA). This is DNA polymerase sliding clamp from Methanothermobacter thermautotrophicus (strain ATCC 29096 / DSM 1053 / JCM 10044 / NBRC 100330 / Delta H) (Methanobacterium thermoautotrophicum).